The primary structure comprises 224 residues: ATP synthase subunit b (224 aa).

A helical transmembrane segment spans residues 2-22 (TPSLGLIFWQSVIFLISFIIL).

The protein belongs to the ATPase B chain family. As to quaternary structure, F-type ATPases have 2 components, F(1) - the catalytic core - and F(0) - the membrane proton channel. F(1) has five subunits: alpha(3), beta(3), gamma(1), delta(1), epsilon(1). F(0) has three main subunits: a(1), b(2) and c(10-14). The alpha and beta chains form an alternating ring which encloses part of the gamma chain. F(1) is attached to F(0) by a central stalk formed by the gamma and epsilon chains, while a peripheral stalk is formed by the delta and b chains.

The protein resides in the cell membrane. F(1)F(0) ATP synthase produces ATP from ADP in the presence of a proton or sodium gradient. F-type ATPases consist of two structural domains, F(1) containing the extramembraneous catalytic core and F(0) containing the membrane proton channel, linked together by a central stalk and a peripheral stalk. During catalysis, ATP synthesis in the catalytic domain of F(1) is coupled via a rotary mechanism of the central stalk subunits to proton translocation. In terms of biological role, component of the F(0) channel, it forms part of the peripheral stalk, linking F(1) to F(0). The sequence is that of ATP synthase subunit b from Karelsulcia muelleri (strain GWSS) (Sulcia muelleri).